We begin with the raw amino-acid sequence, 378 residues long: UDP-4-amino-4-deoxy-L-arabinose--oxoglutarate aminotransferase (378 aa).

The residue at position 182 (K182) is an N6-(pyridoxal phosphate)lysine.

The protein belongs to the DegT/DnrJ/EryC1 family. ArnB subfamily. Homodimer. Pyridoxal 5'-phosphate is required as a cofactor.

The catalysed reaction is UDP-4-amino-4-deoxy-beta-L-arabinose + 2-oxoglutarate = UDP-beta-L-threo-pentopyranos-4-ulose + L-glutamate. The protein operates within nucleotide-sugar biosynthesis; UDP-4-deoxy-4-formamido-beta-L-arabinose biosynthesis; UDP-4-deoxy-4-formamido-beta-L-arabinose from UDP-alpha-D-glucuronate: step 2/3. Its pathway is bacterial outer membrane biogenesis; lipopolysaccharide biosynthesis. Functionally, catalyzes the conversion of UDP-4-keto-arabinose (UDP-Ara4O) to UDP-4-amino-4-deoxy-L-arabinose (UDP-L-Ara4N). The modified arabinose is attached to lipid A and is required for resistance to polymyxin and cationic antimicrobial peptides. The polypeptide is UDP-4-amino-4-deoxy-L-arabinose--oxoglutarate aminotransferase (Aeromonas salmonicida (strain A449)).